Consider the following 302-residue polypeptide: Aspartate carbamoyltransferase catalytic subunit (302 aa).

Arginine 54 and threonine 55 together coordinate carbamoyl phosphate. Lysine 82 lines the L-aspartate pocket. Carbamoyl phosphate is bound by residues arginine 104, histidine 132, and glutamine 135. Arginine 165 and arginine 217 together coordinate L-aspartate. 2 residues coordinate carbamoyl phosphate: glycine 257 and proline 258.

The protein belongs to the aspartate/ornithine carbamoyltransferase superfamily. ATCase family. As to quaternary structure, heterododecamer (2C3:3R2) of six catalytic PyrB chains organized as two trimers (C3), and six regulatory PyrI chains organized as three dimers (R2).

It catalyses the reaction carbamoyl phosphate + L-aspartate = N-carbamoyl-L-aspartate + phosphate + H(+). Its pathway is pyrimidine metabolism; UMP biosynthesis via de novo pathway; (S)-dihydroorotate from bicarbonate: step 2/3. Catalyzes the condensation of carbamoyl phosphate and aspartate to form carbamoyl aspartate and inorganic phosphate, the committed step in the de novo pyrimidine nucleotide biosynthesis pathway. The chain is Aspartate carbamoyltransferase catalytic subunit from Thermus thermophilus (strain ATCC BAA-163 / DSM 7039 / HB27).